The following is a 144-amino-acid chain: Large ribosomal subunit protein uL15 (144 aa).

Residues 1 to 49 form a disordered region; it reads MRLNTLSPAAGAKSAAKRVGRGIGSGTGKTCGRGHKGQKSRSGGGVRVG. Residues 21 to 31 are compositionally biased toward gly residues; sequence RGIGSGTGKTC.

Belongs to the universal ribosomal protein uL15 family. As to quaternary structure, part of the 50S ribosomal subunit.

Functionally, binds to the 23S rRNA. This chain is Large ribosomal subunit protein uL15, found in Shewanella halifaxensis (strain HAW-EB4).